We begin with the raw amino-acid sequence, 352 residues long: Putative histone-lysine N-methyltransferase ASHH4 (352 aa).

In terms of domain architecture, AWS spans 60-109 (DHGIFCSCSLDPGSSTLCGSDCNCGILLSSCSSSCKCSSECTNKPFQQRH). The 118-residue stretch at 111–228 (KKMKLVQTEK…KGEQLTYDYQ (118 aa)) folds into the SET domain. One can recognise a Post-SET domain in the interval 234-250 (ADQDCYCGAVCCRKKLG).

This sequence belongs to the class V-like SAM-binding methyltransferase superfamily. Histone-lysine methyltransferase family. SET2 subfamily.

It localises to the nucleus. The protein localises to the chromosome. The protein resides in the centromere. The enzyme catalyses L-lysyl-[histone] + S-adenosyl-L-methionine = N(6)-methyl-L-lysyl-[histone] + S-adenosyl-L-homocysteine + H(+). Functionally, histone methyltransferase. In Arabidopsis thaliana (Mouse-ear cress), this protein is Putative histone-lysine N-methyltransferase ASHH4 (ASHH4).